We begin with the raw amino-acid sequence, 124 residues long: Small ribosomal subunit protein uS12 (124 aa).

Residues 1 to 24 (MPTINQLVRRPRKPSVSANKAPAL) are disordered. D90 is subject to 3-methylthioaspartic acid.

Belongs to the universal ribosomal protein uS12 family. In terms of assembly, part of the 30S ribosomal subunit. Contacts proteins S8 and S17. May interact with IF1 in the 30S initiation complex.

In terms of biological role, with S4 and S5 plays an important role in translational accuracy. Interacts with and stabilizes bases of the 16S rRNA that are involved in tRNA selection in the A site and with the mRNA backbone. Located at the interface of the 30S and 50S subunits, it traverses the body of the 30S subunit contacting proteins on the other side and probably holding the rRNA structure together. The combined cluster of proteins S8, S12 and S17 appears to hold together the shoulder and platform of the 30S subunit. This is Small ribosomal subunit protein uS12 from Anaplasma phagocytophilum (strain HZ).